Reading from the N-terminus, the 155-residue chain is FUN14 domain-containing protein 1 (155 aa).

The Cytoplasmic segment spans residues 1 to 47 (MATRNPPPQEYESDDDSYEVLDLTEYARRHHWWNRVFGHSSGPMVEK). Phosphoserine occurs at positions 13 and 17. At Y18 the chain carries Phosphotyrosine; by SRC. The short motif at 18-21 (YEVL) is the YXXL element. Residues 48–68 (YSVATQIVMGGVSGWCAGFLF) form a helical membrane-spanning segment. At 69–74 (QKVGKL) the chain is on the mitochondrial intermembrane side. The helical transmembrane segment at 75-95 (AATAVGGGFLLLQIASHSGYV) threads the bilayer. At 96–133 (QIDWKRVEKDVNKAKRQIKKRANKAAPEINNIIEEATE) the chain is on the cytoplasmic side. Residue K119 forms a Glycyl lysine isopeptide (Lys-Gly) (interchain with G-Cter in ubiquitin) linkage. Residues 134–154 (FVKQNIVISSGFVGGFLLGLA) traverse the membrane as a helical segment. S155 is a topological domain (mitochondrial intermembrane).

Belongs to the FUN14 family. In terms of assembly, interacts (via YXXL motif) with MAP1 LC3 family proteins MAP1LC3A, MAP1LC3B and GABARAP. Interacts with DNM1L/DPR1. Interacts with GPX4. In terms of processing, phosphorylation at Ser-13 by CK2 and at Tyr-18 by SRC inhibits activation of mitophagy. Following hypoxia, dephosphorylated at Tyr-18, leading to interaction with MAP1 LC3 family proteins and triggering mitophagy. Dephosphorylation is mediated by PGAM5. Phosphorylated by ULK1 at Ser-17 which enhances FUNDC1 binding to LC3. Post-translationally, ubiquitinated on Lys-119. Deubiquitinated by USP19; leading to hypoxia-induced DRP1 oligomerization and GTPase activity.

Its subcellular location is the mitochondrion outer membrane. In terms of biological role, integral mitochondrial outer-membrane protein that mediates the formation of mitochondria-associated endoplasmic reticulum membranes (MAMs). In turn, mediates angiogenesis and neoangiogenesis through interference with intracellular Ca(2+) communication and regulation of the vascular endothelial growth factor receptor KDR/VEGFR2 expression at both mRNA and protein levels. Also acts as an activator of hypoxia-induced mitophagy, an important mechanism for mitochondrial quality and homeostasis, by interacting with and recruiting LC3 protein family to mitochondria. Mechanistically, recruits DRP1 at ER-mitochondria contact sites leading to DRP1 oligomerization and GTPase activity to facilitate mitochondrial fission during hypoxia. Additionally, plays a role in hepatic ferroptosis by interacting directly with glutathione peroxidase/GPX4 to facilitate its recruitment into mitochondria through TOM/TIM complex where it is degraded by mitophagy. The sequence is that of FUN14 domain-containing protein 1 (FUNDC1) from Bos taurus (Bovine).